Reading from the N-terminus, the 368-residue chain is Lipoyl synthase, chloroplastic (368 aa).

Disordered regions lie at residues 1-30 and 42-61; these read MQSS…RGSV and PTVG…RDPE. Positions 94, 99, 105, 131, 135, 138, and 346 each coordinate [4Fe-4S] cluster. The region spanning 114–335 is the Radical SAM core domain; the sequence is GEGDGIATAT…KEYGESVGFR (222 aa).

This sequence belongs to the radical SAM superfamily. Lipoyl synthase family. [4Fe-4S] cluster is required as a cofactor.

Its subcellular location is the plastid. The protein resides in the chloroplast. It catalyses the reaction [[Fe-S] cluster scaffold protein carrying a second [4Fe-4S](2+) cluster] + N(6)-octanoyl-L-lysyl-[protein] + 2 oxidized [2Fe-2S]-[ferredoxin] + 2 S-adenosyl-L-methionine + 4 H(+) = [[Fe-S] cluster scaffold protein] + N(6)-[(R)-dihydrolipoyl]-L-lysyl-[protein] + 4 Fe(3+) + 2 hydrogen sulfide + 2 5'-deoxyadenosine + 2 L-methionine + 2 reduced [2Fe-2S]-[ferredoxin]. The protein operates within protein modification; protein lipoylation via endogenous pathway; protein N(6)-(lipoyl)lysine from octanoyl-[acyl-carrier-protein]: step 2/2. Functionally, catalyzes the radical-mediated insertion of two sulfur atoms into the C-6 and C-8 positions of the octanoyl moiety bound to the lipoyl domains of lipoate-dependent enzymes, thereby converting the octanoylated domains into lipoylated derivatives. In Sorghum bicolor (Sorghum), this protein is Lipoyl synthase, chloroplastic.